The sequence spans 818 residues: Glycerol-3-phosphate acyltransferase (818 aa).

The short motif at 308-313 is the HXXXXD motif element; sequence CHRSHM.

This sequence belongs to the GPAT/DAPAT family.

The protein resides in the cell inner membrane. The enzyme catalyses sn-glycerol 3-phosphate + an acyl-CoA = a 1-acyl-sn-glycero-3-phosphate + CoA. It functions in the pathway phospholipid metabolism; CDP-diacylglycerol biosynthesis; CDP-diacylglycerol from sn-glycerol 3-phosphate: step 1/3. The protein is Glycerol-3-phosphate acyltransferase of Alteromonas mediterranea (strain DSM 17117 / CIP 110805 / LMG 28347 / Deep ecotype).